The following is a 272-amino-acid chain: D-aminoacyl-tRNA deacylase (272 aa).

Belongs to the DtdA deacylase family. Monomer. Zn(2+) is required as a cofactor.

The catalysed reaction is a D-aminoacyl-tRNA + H2O = a tRNA + a D-alpha-amino acid + H(+). It carries out the reaction glycyl-tRNA(Ala) + H2O = tRNA(Ala) + glycine + H(+). In terms of biological role, D-aminoacyl-tRNA deacylase with broad substrate specificity. By recycling D-aminoacyl-tRNA to D-amino acids and free tRNA molecules, this enzyme counteracts the toxicity associated with the formation of D-aminoacyl-tRNA entities in vivo. The sequence is that of D-aminoacyl-tRNA deacylase from Desulfurococcus amylolyticus (strain DSM 18924 / JCM 16383 / VKM B-2413 / 1221n) (Desulfurococcus kamchatkensis).